A 335-amino-acid chain; its full sequence is Pro-cathepsin H (335 aa).

An N-terminal signal peptide occupies residues M1–A22. Positions A23–S97 are cleaved as a propeptide — activation peptide. The N-linked (GlcNAc...) asparagine glycan is linked to N101. 4 cysteine pairs are disulfide-bonded: C102–C327, C138–C181, C172–C214, and C272–C322. Residues K106–P115 constitute a propeptide that is removed on maturation. C141 is a catalytic residue. Residue N230 is glycosylated (N-linked (GlcNAc...) asparagine). Catalysis depends on residues H281 and N301.

The protein belongs to the peptidase C1 family. In terms of assembly, composed of a mini chain and a large chain. The large chain may be split into heavy and light chain. All chains are held together by disulfide bonds.

It is found in the lysosome. The enzyme catalyses Hydrolysis of proteins, acting as an aminopeptidase (notably, cleaving Arg-|-Xaa bonds) as well as an endopeptidase.. Important for the overall degradation of proteins in lysosomes. The protein is Pro-cathepsin H (CTSH) of Homo sapiens (Human).